Consider the following 216-residue polypeptide: 3-isopropylmalate dehydratase small subunit 2 (216 aa).

It belongs to the LeuD family. LeuD type 1 subfamily. In terms of assembly, heterodimer of LeuC and LeuD.

It carries out the reaction (2R,3S)-3-isopropylmalate = (2S)-2-isopropylmalate. It functions in the pathway amino-acid biosynthesis; L-leucine biosynthesis; L-leucine from 3-methyl-2-oxobutanoate: step 2/4. Its function is as follows. Catalyzes the isomerization between 2-isopropylmalate and 3-isopropylmalate, via the formation of 2-isopropylmaleate. The chain is 3-isopropylmalate dehydratase small subunit 2 from Bordetella pertussis (strain Tohama I / ATCC BAA-589 / NCTC 13251).